A 245-amino-acid polypeptide reads, in one-letter code: DNA polymerase sliding clamp 2 (245 aa).

This sequence belongs to the PCNA family. As to quaternary structure, forms homodimers with PCNA1, which then recruit PCNA3; does not form homotrimers. The heterodimers interact with RfcS homotetramers. Heterotrimer which circularizes head-to-tail (head is at N-terminus, tail is at C-terminus) to form a toroid; DNA passes through its center. Replication factor C (RFC) is required to load the toroid on the DNA. This subunit interacts with DNA polymerase I (dpo1). The heterotrimer also interacts with flap endonuclease 1, DNA ligase and XPF via the other subunits.

One of the sliding clamp subunits that acts as a moving platform for DNA processing. Responsible for tethering the catalytic subunit of DNA polymerase to DNA during high-speed replication. Heterotrimer stimulates the Holliday junction resolvase Hjc. DNA polymerase I, DNA ligase and the flap endonuclease may be constitutively associated with the PCNA heterotrimer forming a scanning complex able to couple DNA synthesis and Okazaki fragment maturation. This chain is DNA polymerase sliding clamp 2, found in Saccharolobus solfataricus (strain ATCC 35092 / DSM 1617 / JCM 11322 / P2) (Sulfolobus solfataricus).